Reading from the N-terminus, the 228-residue chain is Methyltransferase verB (228 aa).

Belongs to the methyltransferase superfamily.

It participates in secondary metabolite biosynthesis; terpenoid biosynthesis. It functions in the pathway mycotoxin biosynthesis. Functionally, methyltransferase; part of the gene cluster that mediates the biosynthesis of the neurotoxin verrucosidin, a methylated alpha-pyrone polyketide that inhibits oxidative phosphorylation in mitochondria and thereby causes neurological diseases. The carbon backbone of verrucosidin is synthesized by the HR-PKS verA, and further modified by the other verrucodidin cluster enzymes. In Penicillium polonicum, this protein is Methyltransferase verB.